A 608-amino-acid chain; its full sequence is 1-phosphatidylinositol 4,5-bisphosphate phosphodiesterase zeta-1 (608 aa).

One can recognise an EF-hand domain in the interval 35-70 (CSYIHVKQIFKDNDRLKQGRITIEEFRAIYRIITHR). In terms of domain architecture, PI-PLC X-box spans 155–299 (QDMTHPLNDY…LKFKILVKNK (145 aa)). Active-site residues include histidine 170 and histidine 215. Residues 305–324 (KETHERKGSDKRGDNQDKET) form a disordered region. Residues 349–465 (LSDLVIYTKA…GYILKPHFLR (117 aa)) form the PI-PLC Y-box domain. The C2 domain maps to 465–589 (RESKSYFNPS…KGYRRIPLFS (125 aa)).

In terms of assembly, interacts via its C2 domain with PtdIns(3)P and, to a lesser extent, PtdIns(5)P in vitro. Requires Ca(2+) as cofactor. In terms of tissue distribution, expressed specifically in testis and sperm. Weakly expressed in pancreatic-duct cells. Up-regulated in pancreatic-duct cells from patients with cystic fibrosis.

The protein resides in the nucleus. It localises to the cytoplasm. It is found in the perinuclear region. It catalyses the reaction a 1,2-diacyl-sn-glycero-3-phospho-(1D-myo-inositol-4,5-bisphosphate) + H2O = 1D-myo-inositol 1,4,5-trisphosphate + a 1,2-diacyl-sn-glycerol + H(+). The production of the second messenger molecules diacylglycerol (DAG) and inositol 1,4,5-trisphosphate (IP3) is mediated by activated phosphatidylinositol-specific phospholipase C enzymes. In vitro, hydrolyzes PtdIns(4,5)P2 in a Ca(2+)-dependent manner. Triggers intracellular Ca(2+) oscillations in oocytes solely during M phase and is involved in inducing oocyte activation and initiating embryonic development up to the blastocyst stage. Is therefore a strong candidate for the egg-activating soluble sperm factor that is transferred from the sperm into the egg cytoplasm following gamete membrane fusion. May exert an inhibitory effect on phospholipase-C-coupled processes that depend on calcium ions and protein kinase C, including CFTR trafficking and function. The protein is 1-phosphatidylinositol 4,5-bisphosphate phosphodiesterase zeta-1 of Homo sapiens (Human).